The following is a 231-amino-acid chain: Flagellar L-ring protein (231 aa).

Residues 1 to 18 (MNRLMIVSLLGIATALGG) form the signal peptide. Residue Cys19 is the site of N-palmitoyl cysteine attachment. A lipid anchor (S-diacylglycerol cysteine) is attached at Cys19. The tract at residues 118–141 (LSLSAEYGGSRDAKGDSQAGQSNS) is disordered.

This sequence belongs to the FlgH family. In terms of assembly, the basal body constitutes a major portion of the flagellar organelle and consists of four rings (L,P,S, and M) mounted on a central rod.

The protein resides in the cell outer membrane. Its subcellular location is the bacterial flagellum basal body. In terms of biological role, assembles around the rod to form the L-ring and probably protects the motor/basal body from shearing forces during rotation. In Pseudomonas aeruginosa (strain UCBPP-PA14), this protein is Flagellar L-ring protein.